Reading from the N-terminus, the 102-residue chain is Large ribosomal subunit protein bL21 (102 aa).

It belongs to the bacterial ribosomal protein bL21 family. As to quaternary structure, part of the 50S ribosomal subunit. Contacts protein L20.

Its function is as follows. This protein binds to 23S rRNA in the presence of protein L20. This Macrococcus caseolyticus (strain JCSC5402) (Macrococcoides caseolyticum) protein is Large ribosomal subunit protein bL21.